Reading from the N-terminus, the 524-residue chain is Protein-export membrane protein SecD (524 aa).

The next 6 membrane-spanning stretches (helical) occupy residues 10 to 30 (VIFL…PTMG), 366 to 386 (KFDS…VVFI), 389 to 409 (GKPQ…YILL), 420 to 442 (DLSV…IIIA), 465 to 485 (FWVI…LAVL), and 487 to 507 (LGDL…GVLV).

It belongs to the SecD/SecF family. SecD subfamily. As to quaternary structure, part of the protein translocation apparatus. Forms a homodimer and complexes with SecF.

Its subcellular location is the cell membrane. In terms of biological role, involved in protein export. This Haloferax volcanii (strain ATCC 29605 / DSM 3757 / JCM 8879 / NBRC 14742 / NCIMB 2012 / VKM B-1768 / DS2) (Halobacterium volcanii) protein is Protein-export membrane protein SecD.